The primary structure comprises 307 residues: Nuclear polyadenylated RNA-binding protein nab2 (307 aa).

The segment at 102-135 (STDKSQQSFSVPETSIQPQSSQTPNITSLREEKE) is disordered. Positions 105-129 (KSQQSFSVPETSIQPQSSQTPNITS) are enriched in polar residues. 3 C3H1-type zinc fingers span residues 178-202 (TQEV…HPTP), 217-232 (CASG…VKGH), and 254-268 (CKYK…RFIH). The tract at residues 274–307 (NMTWRPPSKTEETSLSERSFAVNESEEQLHVPSV) is disordered.

This sequence belongs to the ZC3H14 family.

Its subcellular location is the nucleus. In terms of biological role, RNA-binding protein involved in RNA processing. Acts as a regulator of mRNA stability: binds to mRNAs and pre-mRNAs, preventing their degradation. Involved in the biogenesis of circular RNAs (circRNAs) which are produced by back-splicing circularization of pre-mRNAs. This Schizosaccharomyces pombe (strain 972 / ATCC 24843) (Fission yeast) protein is Nuclear polyadenylated RNA-binding protein nab2.